The primary structure comprises 71 residues: MSKDDLIQFTGTVLELLPNATFRVKLENDHVIIAHTSGRMRKNRIRILLGDKVTVEMTPYDLTKGRVIHRH.

Residues 1-71 (MSKDDLIQFT…LTKGRVIHRH (71 aa)) form the S1-like domain.

This sequence belongs to the IF-1 family. In terms of assembly, component of the 30S ribosomal translation pre-initiation complex which assembles on the 30S ribosome in the order IF-2 and IF-3, IF-1 and N-formylmethionyl-tRNA(fMet); mRNA recruitment can occur at any time during PIC assembly.

Its subcellular location is the cytoplasm. One of the essential components for the initiation of protein synthesis. Stabilizes the binding of IF-2 and IF-3 on the 30S subunit to which N-formylmethionyl-tRNA(fMet) subsequently binds. Helps modulate mRNA selection, yielding the 30S pre-initiation complex (PIC). Upon addition of the 50S ribosomal subunit IF-1, IF-2 and IF-3 are released leaving the mature 70S translation initiation complex. The chain is Translation initiation factor IF-1 from Rickettsia typhi (strain ATCC VR-144 / Wilmington).